We begin with the raw amino-acid sequence, 356 residues long: D-alanine--D-alanine ligase (356 aa).

In terms of domain architecture, ATP-grasp spans 134–339 (KQLFEHRGLP…YPELITKLIE (206 aa)). Residue 167–222 (NDKLNYPVFVKPANLGSSVGISKCNNEAELKEGIKEAFQFDRKLVIEQGVNAREIE) participates in ATP binding. 3 residues coordinate Mg(2+): Asp-293, Glu-306, and Asn-308.

It belongs to the D-alanine--D-alanine ligase family. Requires Mg(2+) as cofactor. The cofactor is Mn(2+).

It is found in the cytoplasm. The enzyme catalyses 2 D-alanine + ATP = D-alanyl-D-alanine + ADP + phosphate + H(+). It functions in the pathway cell wall biogenesis; peptidoglycan biosynthesis. In terms of biological role, cell wall formation. In Staphylococcus aureus (strain Mu3 / ATCC 700698), this protein is D-alanine--D-alanine ligase.